A 708-amino-acid polypeptide reads, in one-letter code: DNA ligase (708 aa).

NAD(+) contacts are provided by residues 35-39 (DADYD), 84-85 (SL), and E118. The active-site N6-AMP-lysine intermediate is the K120. NAD(+)-binding residues include R141, E182, K303, and K327. The Zn(2+) site is built by C419, C422, C437, and C443. The BRCT domain occupies 628-708 (TRASEVSGKT…GWAKIVADAQ (81 aa)).

This sequence belongs to the NAD-dependent DNA ligase family. LigA subfamily. Mg(2+) serves as cofactor. The cofactor is Mn(2+).

The catalysed reaction is NAD(+) + (deoxyribonucleotide)n-3'-hydroxyl + 5'-phospho-(deoxyribonucleotide)m = (deoxyribonucleotide)n+m + AMP + beta-nicotinamide D-nucleotide.. Functionally, DNA ligase that catalyzes the formation of phosphodiester linkages between 5'-phosphoryl and 3'-hydroxyl groups in double-stranded DNA using NAD as a coenzyme and as the energy source for the reaction. It is essential for DNA replication and repair of damaged DNA. The polypeptide is DNA ligase (Rhizorhabdus wittichii (strain DSM 6014 / CCUG 31198 / JCM 15750 / NBRC 105917 / EY 4224 / RW1) (Sphingomonas wittichii)).